Reading from the N-terminus, the 296-residue chain is N-acetylmuramic acid 6-phosphate etherase 2 (296 aa).

The 164-residue stretch at 55–218 (IVANFKAGGR…STASMVGIGK (164 aa)) folds into the SIS domain. Glu83 acts as the Proton donor in catalysis. Residue Glu114 is part of the active site.

It belongs to the GCKR-like family. MurNAc-6-P etherase subfamily. As to quaternary structure, homodimer.

The catalysed reaction is N-acetyl-D-muramate 6-phosphate + H2O = N-acetyl-D-glucosamine 6-phosphate + (R)-lactate. It participates in amino-sugar metabolism; N-acetylmuramate degradation. Functionally, specifically catalyzes the cleavage of the D-lactyl ether substituent of MurNAc 6-phosphate, producing GlcNAc 6-phosphate and D-lactate. This chain is N-acetylmuramic acid 6-phosphate etherase 2, found in Lactiplantibacillus plantarum (strain ATCC BAA-793 / NCIMB 8826 / WCFS1) (Lactobacillus plantarum).